The chain runs to 539 residues: Chaperonin GroEL (539 aa).

ATP-binding positions include 29–32 (TLGP), 86–90 (DGTTT), G413, 476–478 (NAA), and D492.

This sequence belongs to the chaperonin (HSP60) family. As to quaternary structure, forms a cylinder of 14 subunits composed of two heptameric rings stacked back-to-back. Interacts with the co-chaperonin GroES.

It is found in the cytoplasm. The catalysed reaction is ATP + H2O + a folded polypeptide = ADP + phosphate + an unfolded polypeptide.. Functionally, together with its co-chaperonin GroES, plays an essential role in assisting protein folding. The GroEL-GroES system forms a nano-cage that allows encapsulation of the non-native substrate proteins and provides a physical environment optimized to promote and accelerate protein folding. The polypeptide is Chaperonin GroEL (Streptococcus thermophilus (strain CNRZ 1066)).